The following is a 91-amino-acid chain: Secretoglobin family 3A member 2 (91 aa).

Residues 1–21 (MKLVSIFLLVTIGICGYSATA) form the signal peptide.

Belongs to the secretoglobin family. UGRP subfamily. In terms of assembly, homodimer; disulfide-linked. Monomer. Interacts with APOA1. Highly expressed in lung where it localizes to epithelial cells of the trachea, bronchus and bronchioles (at protein level). Expressed in club cells of the bronchioles. Also detected in the anterior and posterior lobes of the pituitary gland where it may localize to gonadotropic cells (at protein level). Not detected in other tissues tested.

The protein resides in the secreted. Secreted cytokine-like protein. Binds to the scavenger receptor MARCO. Can also bind to pathogens including the Gram-positive bacterium L.monocytogenes, the Gram-negative bacterium P.aeruginosa, and yeast. Strongly inhibits phospholipase A2 (PLA2G1B) activity. Seems to have anti-inflammatory effects in respiratory epithelium. Also has anti-fibrotic activity in lung. May play a role in fetal lung development and maturation. Promotes branching morphogenesis during early stages of lung development. In the pituitary, may inhibit production of follicle-stimulating hormone (FSH) and luteinizing hormone (LH). This Mus musculus (Mouse) protein is Secretoglobin family 3A member 2 (Scgb3a2).